We begin with the raw amino-acid sequence, 36 residues long: Photosystem I reaction center subunit VIII (36 aa).

The chain crosses the membrane as a helical span at residues 9-29; it reads ILVPLVGLVFPAIAMASLFLY.

The protein belongs to the PsaI family.

The protein localises to the plastid. Its subcellular location is the chloroplast thylakoid membrane. Functionally, may help in the organization of the PsaL subunit. The polypeptide is Photosystem I reaction center subunit VIII (Oltmannsiellopsis viridis (Marine flagellate)).